An 89-amino-acid chain; its full sequence is Large ribosomal subunit protein eL34 (89 aa).

The segment at 41–69 (RPLNGVPRGRPSELRKLPKTAKRPERPYP) is disordered. Basic and acidic residues predominate over residues 50 to 66 (RPSELRKLPKTAKRPER).

This sequence belongs to the eukaryotic ribosomal protein eL34 family.

The protein is Large ribosomal subunit protein eL34 of Thermococcus gammatolerans (strain DSM 15229 / JCM 11827 / EJ3).